A 124-amino-acid polypeptide reads, in one-letter code: Small ribosomal subunit protein uS12 (124 aa).

Asp-89 is subject to 3-methylthioaspartic acid.

This sequence belongs to the universal ribosomal protein uS12 family. As to quaternary structure, part of the 30S ribosomal subunit. Contacts proteins S8 and S17. May interact with IF1 in the 30S initiation complex.

Functionally, with S4 and S5 plays an important role in translational accuracy. In terms of biological role, interacts with and stabilizes bases of the 16S rRNA that are involved in tRNA selection in the A site and with the mRNA backbone. Located at the interface of the 30S and 50S subunits, it traverses the body of the 30S subunit contacting proteins on the other side and probably holding the rRNA structure together. The combined cluster of proteins S8, S12 and S17 appears to hold together the shoulder and platform of the 30S subunit. The protein is Small ribosomal subunit protein uS12 of Shewanella halifaxensis (strain HAW-EB4).